The chain runs to 619 residues: Dihydroxy-acid dehydratase (619 aa).

Residue Asp80 participates in Mg(2+) binding. Position 121 (Cys121) interacts with [2Fe-2S] cluster. Mg(2+) contacts are provided by Asp122 and Lys123. The residue at position 123 (Lys123) is an N6-carboxylysine. Cys196 is a [2Fe-2S] cluster binding site. Residue Glu492 coordinates Mg(2+). Ser518 serves as the catalytic Proton acceptor.

This sequence belongs to the IlvD/Edd family. Homodimer. Requires [2Fe-2S] cluster as cofactor. Mg(2+) is required as a cofactor.

The enzyme catalyses (2R)-2,3-dihydroxy-3-methylbutanoate = 3-methyl-2-oxobutanoate + H2O. It carries out the reaction (2R,3R)-2,3-dihydroxy-3-methylpentanoate = (S)-3-methyl-2-oxopentanoate + H2O. It participates in amino-acid biosynthesis; L-isoleucine biosynthesis; L-isoleucine from 2-oxobutanoate: step 3/4. The protein operates within amino-acid biosynthesis; L-valine biosynthesis; L-valine from pyruvate: step 3/4. Functionally, functions in the biosynthesis of branched-chain amino acids. Catalyzes the dehydration of (2R,3R)-2,3-dihydroxy-3-methylpentanoate (2,3-dihydroxy-3-methylvalerate) into 2-oxo-3-methylpentanoate (2-oxo-3-methylvalerate) and of (2R)-2,3-dihydroxy-3-methylbutanoate (2,3-dihydroxyisovalerate) into 2-oxo-3-methylbutanoate (2-oxoisovalerate), the penultimate precursor to L-isoleucine and L-valine, respectively. This chain is Dihydroxy-acid dehydratase, found in Bifidobacterium adolescentis (strain ATCC 15703 / DSM 20083 / NCTC 11814 / E194a).